The primary structure comprises 304 residues: Flagellin (304 aa).

The protein belongs to the bacterial flagellin family. Interacts with FliW in a 1:1 complex. Forms a 3-way complex of Hag, FliS and FliW, in which Flis and FliW do not directly interact.

The protein resides in the secreted. It localises to the bacterial flagellum. Its subcellular location is the cell wall. In terms of biological role, flagellin is the subunit which polymerizes to form the filaments of bacterial flagella. Assembly into flagella requires FliW. Acts as a homeostatic autoinhibitory regulator to control its own cytoplasmic levels. Partner switching by flagellin between FliW and CsrA provides a flagellar assembly checkpoint to tightly control the timing of flagellin synthesis. Flagellin binds to assembly factor FliW, freeing translation regulator CsrA to repress translation of the flagellin mRNA. When the flagellar hook is assembled flagellin is secreted, depleting intracellular flagellin, which frees FliW to interact with CsrA. This derepresses flagellin translation and provides protein for flagellar assembly. Once the flagellar filament is completed cytoplasmic flagellin levels rise and CsrA translation repression of flagellin reinitiates. In Bacillus subtilis (strain 168), this protein is Flagellin.